The primary structure comprises 204 residues: Oxidoreductase iacF (204 aa).

This sequence belongs to the oxidoreductase OpS7 family.

It participates in secondary metabolite biosynthesis. Functionally, oxidoreductase; part of the gene cluster that mediates the biosynthesis of iso-A82775C, a enylepoxycyclohexane and biosynthetic precursor of the chloropestolide anticancer natural products. Within the cluster, the prenyltransferase iacE prenylates siccayne to generate pestalodiol E, using dimethylallyl diphosphate (DMAPP) as cosubstrate. The probable oxidoreductase iacF is then involved in the epoxidation of pestalodiol F to pestalodiol F, which is further converted to pestalofone A by the short-chain dehydrogenase/reductase iacG. Iso-A82775C is subsequently generated from pestalofone A by the short-chain dehydrogenase/reductase iacC. Iso-A82775C is further condensed with maldoxin via a Diels-Alder reaction to produce the anticancer natural products chloropestolides A to E. In Pestalotiopsis fici (strain W106-1 / CGMCC3.15140), this protein is Oxidoreductase iacF.